We begin with the raw amino-acid sequence, 150 residues long: D-aminoacyl-tRNA deacylase (150 aa).

The Gly-cisPro motif, important for rejection of L-amino acids signature appears at 137 to 138 (GP).

It belongs to the DTD family. Homodimer.

It localises to the cytoplasm. The enzyme catalyses glycyl-tRNA(Ala) + H2O = tRNA(Ala) + glycine + H(+). It carries out the reaction a D-aminoacyl-tRNA + H2O = a tRNA + a D-alpha-amino acid + H(+). An aminoacyl-tRNA editing enzyme that deacylates mischarged D-aminoacyl-tRNAs. Also deacylates mischarged glycyl-tRNA(Ala), protecting cells against glycine mischarging by AlaRS. Acts via tRNA-based rather than protein-based catalysis; rejects L-amino acids rather than detecting D-amino acids in the active site. By recycling D-aminoacyl-tRNA to D-amino acids and free tRNA molecules, this enzyme counteracts the toxicity associated with the formation of D-aminoacyl-tRNA entities in vivo and helps enforce protein L-homochirality. In Listeria innocua serovar 6a (strain ATCC BAA-680 / CLIP 11262), this protein is D-aminoacyl-tRNA deacylase.